The primary structure comprises 945 residues: Nonsense-mediated mRNA decay factor SMG8 (945 aa).

2 disordered regions span residues 563 to 604 (RAEP…SANE) and 633 to 671 (AEAE…ERSA).

Belongs to the SMG8 family.

Involved in nonsense-mediated decay (NMD) of mRNAs containing premature stop codons. Probable component of kinase complex containing nonC and recruited to stalled ribosomes. This chain is Nonsense-mediated mRNA decay factor SMG8, found in Drosophila grimshawi (Hawaiian fruit fly).